Consider the following 335-residue polypeptide: Biotin synthase (335 aa).

Residues 46–274 (YKVQLASLFS…KSKIRLSAGR (229 aa)) enclose the Radical SAM core domain. Residues C61, C65, and C68 each contribute to the [4Fe-4S] cluster site. The [2Fe-2S] cluster site is built by C105, C137, C197, and R269.

The protein belongs to the radical SAM superfamily. Biotin synthase family. Homodimer. Requires [4Fe-4S] cluster as cofactor. The cofactor is [2Fe-2S] cluster.

The catalysed reaction is (4R,5S)-dethiobiotin + (sulfur carrier)-SH + 2 reduced [2Fe-2S]-[ferredoxin] + 2 S-adenosyl-L-methionine = (sulfur carrier)-H + biotin + 2 5'-deoxyadenosine + 2 L-methionine + 2 oxidized [2Fe-2S]-[ferredoxin]. It functions in the pathway cofactor biosynthesis; biotin biosynthesis; biotin from 7,8-diaminononanoate: step 2/2. In terms of biological role, catalyzes the conversion of dethiobiotin (DTB) to biotin by the insertion of a sulfur atom into dethiobiotin via a radical-based mechanism. The sequence is that of Biotin synthase from Prochlorococcus marinus subsp. pastoris (strain CCMP1986 / NIES-2087 / MED4).